The chain runs to 331 residues: Phosphate acyltransferase (331 aa).

The protein belongs to the PlsX family. As to quaternary structure, homodimer. Probably interacts with PlsY.

The protein localises to the cytoplasm. The catalysed reaction is a fatty acyl-[ACP] + phosphate = an acyl phosphate + holo-[ACP]. Its pathway is lipid metabolism; phospholipid metabolism. Functionally, catalyzes the reversible formation of acyl-phosphate (acyl-PO(4)) from acyl-[acyl-carrier-protein] (acyl-ACP). This enzyme utilizes acyl-ACP as fatty acyl donor, but not acyl-CoA. The polypeptide is Phosphate acyltransferase (Wolinella succinogenes (strain ATCC 29543 / DSM 1740 / CCUG 13145 / JCM 31913 / LMG 7466 / NCTC 11488 / FDC 602W) (Vibrio succinogenes)).